The sequence spans 252 residues: Hsp70-Hsp90 organising protein (252 aa).

TPR repeat units lie at residues 7-40, 41-74, and 75-108; these read AQRL…DPLD, HVLY…KKDW, and PKGY…DPNN. Residues 197-239 are a coiled coil; the sequence is EGNDAEERQRQQREEEERRKKKEEEERKKKEEEEMKKQNRTPE. Residues 199–252 form a disordered region; the sequence is NDAEERQRQQREEEERRKKKEEEERKKKEEEEMKKQNRTPEQIQGDEHKLKVMN. 2 stretches are compositionally biased toward basic and acidic residues: residues 201–233 and 243–252; these read AEER…EMKK and GDEHKLKVMN.

Monomer. Homodimer. Forms a complex composed of HOP and chaperones HSP70 and HSP90; the interaction is stronger in the absence of ATP. Interacts (via TPR 1, 2, 3, 7, 8 and 9 repeats) with HSP70 (via C-terminus); the interaction is direct and is stronger in the absence of ATP. Interacts (via TPR 4, 5 and 6 repeats) with HSP90 (via C-terminus); the interaction is direct.

The protein localises to the cytoplasm. Acts as a co-chaperone and mediates the association of the chaperones HSP70 and HSP90 probably facilitating substrate transfer from HSP70 to HSP90. Stimulates HSP70 ATPase activity and, in contrast, inhibits HSP90 ATPase activity. This is Hsp70-Hsp90 organising protein from Plasmodium falciparum.